Here is a 409-residue protein sequence, read N- to C-terminus: Glucose-1-phosphate adenylyltransferase (409 aa).

Residues Gly168, 183 to 184, and Ser201 contribute to the alpha-D-glucose 1-phosphate site; that span reads EK.

Belongs to the bacterial/plant glucose-1-phosphate adenylyltransferase family. In terms of assembly, homotetramer.

The catalysed reaction is alpha-D-glucose 1-phosphate + ATP + H(+) = ADP-alpha-D-glucose + diphosphate. It functions in the pathway glycan biosynthesis; glycogen biosynthesis. Functionally, involved in the biosynthesis of ADP-glucose, a building block required for the elongation reactions to produce glycogen. Catalyzes the reaction between ATP and alpha-D-glucose 1-phosphate (G1P) to produce pyrophosphate and ADP-Glc. The protein is Glucose-1-phosphate adenylyltransferase of Corynebacterium glutamicum (strain R).